A 331-amino-acid chain; its full sequence is Glycerol-3-phosphate dehydrogenase [NAD(P)+] (331 aa).

Positions 10, 11, and 101 each coordinate NADPH. Positions 101, 132, and 134 each coordinate sn-glycerol 3-phosphate. Ala-136 is an NADPH binding site. 5 residues coordinate sn-glycerol 3-phosphate: Lys-188, Asp-241, Ser-251, Arg-252, and Asn-253. Lys-188 (proton acceptor) is an active-site residue. Residue Arg-252 participates in NADPH binding. NADPH is bound by residues Val-276 and Glu-278.

The protein belongs to the NAD-dependent glycerol-3-phosphate dehydrogenase family.

It is found in the cytoplasm. The catalysed reaction is sn-glycerol 3-phosphate + NAD(+) = dihydroxyacetone phosphate + NADH + H(+). It catalyses the reaction sn-glycerol 3-phosphate + NADP(+) = dihydroxyacetone phosphate + NADPH + H(+). Its pathway is membrane lipid metabolism; glycerophospholipid metabolism. Its function is as follows. Catalyzes the reduction of the glycolytic intermediate dihydroxyacetone phosphate (DHAP) to sn-glycerol 3-phosphate (G3P), the key precursor for phospholipid synthesis. The sequence is that of Glycerol-3-phosphate dehydrogenase [NAD(P)+] from Acholeplasma laidlawii (strain PG-8A).